Here is a 181-residue protein sequence, read N- to C-terminus: Shikimate kinase 2 (181 aa).

12–17 (GCGKTT) contributes to the ATP binding site. Residues threonine 16 and aspartate 32 each contribute to the Mg(2+) site. Residues aspartate 34, arginine 58, and glycine 79 each coordinate substrate. Residues 112–126 (EAEPEADLRPTLTGK) form an LID domain region. ATP is bound at residue arginine 120. A substrate-binding site is contributed by arginine 139.

It belongs to the shikimate kinase family. AroL subfamily. In terms of assembly, monomer. The cofactor is Mg(2+).

The protein localises to the cytoplasm. The catalysed reaction is shikimate + ATP = 3-phosphoshikimate + ADP + H(+). Its pathway is metabolic intermediate biosynthesis; chorismate biosynthesis; chorismate from D-erythrose 4-phosphate and phosphoenolpyruvate: step 5/7. Functionally, catalyzes the specific phosphorylation of the 3-hydroxyl group of shikimic acid using ATP as a cosubstrate. This chain is Shikimate kinase 2, found in Salmonella heidelberg (strain SL476).